The sequence spans 818 residues: Elongation factor G, mitochondrial (818 aa).

The N-terminal 23 residues, 1-23 (MFLGRAASRTCRHSQPLRVAARA), are a transit peptide targeting the mitochondrion. Residues 67 to 96 (MASTATATKPTEEASSSDQPPAPAHKLTDN) form a disordered region. A compositionally biased stretch (polar residues) spans 69-85 (STATATKPTEEASSSDQ). Positions 102-390 (TFQRNIGISA…GVCEYLPNPS (289 aa)) constitute a tr-type G domain. GTP-binding positions include 111-118 (AHIDSGKT), 188-192 (DTPGH), and 242-245 (NKMD).

The protein belongs to the TRAFAC class translation factor GTPase superfamily. Classic translation factor GTPase family. EF-G/EF-2 subfamily.

It localises to the mitochondrion. Its pathway is protein biosynthesis; polypeptide chain elongation. In terms of biological role, mitochondrial GTPase that catalyzes the GTP-dependent ribosomal translocation step during translation elongation. During this step, the ribosome changes from the pre-translocational (PRE) to the post-translocational (POST) state as the newly formed A-site-bound peptidyl-tRNA and P-site-bound deacylated tRNA move to the P and E sites, respectively. Catalyzes the coordinated movement of the two tRNA molecules, the mRNA and conformational changes in the ribosome. The protein is Elongation factor G, mitochondrial of Coprinopsis cinerea (strain Okayama-7 / 130 / ATCC MYA-4618 / FGSC 9003) (Inky cap fungus).